The chain runs to 454 residues: Bifunctional protein GlmU (454 aa).

The pyrophosphorylase stretch occupies residues 1–232; it reads MTDRTCLSIV…VDNVIGINNR (232 aa). UDP-N-acetyl-alpha-D-glucosamine contacts are provided by residues 11–14, lysine 25, glutamine 78, and 83–84; these read LAAG and GT. Aspartate 108 is a Mg(2+) binding site. 4 residues coordinate UDP-N-acetyl-alpha-D-glucosamine: glycine 144, glutamate 158, asparagine 173, and asparagine 230. Asparagine 230 provides a ligand contact to Mg(2+). A linker region spans residues 233 to 253; sequence AELAEAETIWQNRKRRELMLS. The N-acetyltransferase stretch occupies residues 254–454; the sequence is GVTLIAPETV…AIKAAKSVSK (201 aa). Positions 319 and 337 each coordinate UDP-N-acetyl-alpha-D-glucosamine. The Proton acceptor role is filled by histidine 349. UDP-N-acetyl-alpha-D-glucosamine is bound by residues tyrosine 352 and asparagine 363. Acetyl-CoA is bound by residues alanine 366, 372-373, serine 391, serine 409, and arginine 426; that span reads NY.

The protein in the N-terminal section; belongs to the N-acetylglucosamine-1-phosphate uridyltransferase family. In the C-terminal section; belongs to the transferase hexapeptide repeat family. Homotrimer. Requires Mg(2+) as cofactor.

The protein localises to the cytoplasm. The enzyme catalyses alpha-D-glucosamine 1-phosphate + acetyl-CoA = N-acetyl-alpha-D-glucosamine 1-phosphate + CoA + H(+). It carries out the reaction N-acetyl-alpha-D-glucosamine 1-phosphate + UTP + H(+) = UDP-N-acetyl-alpha-D-glucosamine + diphosphate. It functions in the pathway nucleotide-sugar biosynthesis; UDP-N-acetyl-alpha-D-glucosamine biosynthesis; N-acetyl-alpha-D-glucosamine 1-phosphate from alpha-D-glucosamine 6-phosphate (route II): step 2/2. The protein operates within nucleotide-sugar biosynthesis; UDP-N-acetyl-alpha-D-glucosamine biosynthesis; UDP-N-acetyl-alpha-D-glucosamine from N-acetyl-alpha-D-glucosamine 1-phosphate: step 1/1. It participates in bacterial outer membrane biogenesis; LPS lipid A biosynthesis. Catalyzes the last two sequential reactions in the de novo biosynthetic pathway for UDP-N-acetylglucosamine (UDP-GlcNAc). The C-terminal domain catalyzes the transfer of acetyl group from acetyl coenzyme A to glucosamine-1-phosphate (GlcN-1-P) to produce N-acetylglucosamine-1-phosphate (GlcNAc-1-P), which is converted into UDP-GlcNAc by the transfer of uridine 5-monophosphate (from uridine 5-triphosphate), a reaction catalyzed by the N-terminal domain. The sequence is that of Bifunctional protein GlmU from Brucella melitensis biotype 1 (strain ATCC 23456 / CCUG 17765 / NCTC 10094 / 16M).